A 159-amino-acid chain; its full sequence is MRCPFCRHEDTQVVDSRVSEDGAAIRRRRRCSACDKRFTTYERVELNLPAVVKKDGSRTEFDRRKIVASMQLALRKRPVAADAIDAAVARIEYQLLATGEREVRSEKLGELVMNELRGLDTIAYVRFASVYRRFEDVSEFADVIEEFRRASPSKPPRKR.

Residues 3–34 (CPFCRHEDTQVVDSRVSEDGAAIRRRRRCSAC) fold into a zinc finger. The ATP-cone domain maps to 49–139 (PAVVKKDGSR…VYRRFEDVSE (91 aa)).

Belongs to the NrdR family. Zn(2+) serves as cofactor.

Its function is as follows. Negatively regulates transcription of bacterial ribonucleotide reductase nrd genes and operons by binding to NrdR-boxes. This Burkholderia vietnamiensis (strain G4 / LMG 22486) (Burkholderia cepacia (strain R1808)) protein is Transcriptional repressor NrdR.